The sequence spans 310 residues: Putative S-adenosyl-L-methionine-dependent methyltransferase MUL_4762 (310 aa).

S-adenosyl-L-methionine is bound by residues aspartate 132 and 161 to 162 (DL).

It belongs to the UPF0677 family.

Exhibits S-adenosyl-L-methionine-dependent methyltransferase activity. This Mycobacterium ulcerans (strain Agy99) protein is Putative S-adenosyl-L-methionine-dependent methyltransferase MUL_4762.